The primary structure comprises 285 residues: ATP phosphoribosyltransferase (285 aa).

It belongs to the ATP phosphoribosyltransferase family. Long subfamily. It depends on Mg(2+) as a cofactor.

Its subcellular location is the cytoplasm. It catalyses the reaction 1-(5-phospho-beta-D-ribosyl)-ATP + diphosphate = 5-phospho-alpha-D-ribose 1-diphosphate + ATP. The protein operates within amino-acid biosynthesis; L-histidine biosynthesis; L-histidine from 5-phospho-alpha-D-ribose 1-diphosphate: step 1/9. Its activity is regulated as follows. Feedback inhibited by histidine. Catalyzes the condensation of ATP and 5-phosphoribose 1-diphosphate to form N'-(5'-phosphoribosyl)-ATP (PR-ATP). Has a crucial role in the pathway because the rate of histidine biosynthesis seems to be controlled primarily by regulation of HisG enzymatic activity. The protein is ATP phosphoribosyltransferase of Methanocella arvoryzae (strain DSM 22066 / NBRC 105507 / MRE50).